Reading from the N-terminus, the 983-residue chain is Eukaryotic translation initiation factor 4E transporter (983 aa).

Positions 1-22 are disordered; it reads MEKSVAETENGDAFLELKKLPT. Ser-4 bears the Phosphoserine mark. Positions 29 to 35 match the YXXXXLphi motif motif; it reads YTKEELL. The disordered stretch occupies residues 40–99; the sequence is RPYSKQRPSCLSEKYDSDGVWDPEKWHASLYPASGRSSPVESLKKESESDRPSLVRRIAD. Residues 52–66 show a composition bias toward basic and acidic residues; the sequence is EKYDSDGVWDPEKWH. Phosphoserine occurs at positions 73 and 77. Basic and acidic residues predominate over residues 81–99; it reads SLKKESESDRPSLVRRIAD. Ser-114, Ser-119, Ser-135, and Ser-137 each carry phosphoserine. Residues 130–160 are interaction with CSDE1; it reads VSSRRSGSPLEKDSDGLRLLGGRRIGSGRII. Residues 194-210 carry the Nuclear localization signal motif; the sequence is RREFGDSKRVFGERRRN. The disordered stretch occupies residues 206–229; that stretch reads ERRRNDSYTEEEPEWFSAGPTSQS. The interaction with DDX6 stretch occupies residues 218–239; it reads PEWFSAGPTSQSETIELTGFDD. 4 positions are modified to phosphoserine: Ser-300, Ser-344, Ser-352, and Ser-373. A disordered region spans residues 341–360; sequence SNPSRSGSRSSSLGSTPHEE. Low complexity predominate over residues 344-355; the sequence is SRSGSRSSSLGS. A Glycyl lysine isopeptide (Lys-Gly) (interchain with G-Cter in SUMO2) cross-link involves residue Lys-409. Ser-416 is modified (phosphoserine). The short motif at 437–446 is the Nuclear export signal element; sequence VEAGLKGLKV. Positions 447 to 489 are interaction with LSM14A; that stretch reads DQQMKNSTPFMAEHLEETLSAASSNRQLKKDGDMTAFNKLVNT. Lys-485 bears the N6-acetyllysine mark. Ser-563 and Ser-586 each carry phosphoserine. Disordered regions lie at residues 585-616, 642-693, 708-800, and 906-951; these read PSPIGFPSGPQQLLGDPFQGMRKPMSPVSAQM, FYQP…MLSP, REKT…VPGT, and LHPP…SSPV. Residues 612 to 637 carry the Nuclear export signal motif; sequence VSAQMSQLELQQAALEGLALPHDLAV. Residues 651-660 are compositionally biased toward basic and acidic residues; sequence QVDRTRDGLR. Position 692 is a phosphoserine (Ser-692). The tract at residues 694 to 712 is interaction with PATL1; it reads SFTPTSVIRKMYESREKTK. A compositionally biased stretch (basic and acidic residues) spans 724–734; that stretch reads DGKEDTQKTSE. Composition is skewed to polar residues over residues 735–774 and 910–928; these read ENLLSSNPIPNTDQDSSTTNPKLSTLQRSSCSTPLSQTSR and GSSSQAAAISVQTPQNVPS. Phosphoserine is present on residues Ser-751, Ser-919, and Ser-949. The segment at 938–983 is interaction with LSM14A; sequence QLEHRTSQRSSSPVGLAKWFGSDVLQQPLPSMPTKVISVDELEYRQ.

Belongs to the 4E-T/EIF4E-T family. As to quaternary structure, interacts (via YXXXXLphi motif) with EIF4E. Interacts (via YXXXXLphi motif) with EIF4E2. Interacts with DDX6. Interacts with CSDE1/UNR. Interacts with CNOT1; promoting association with the CCR4-NOT complex. Interacts with LSM14A; promoting EIF4ENIF1 localization to P-bodies. Interacts with PATL1. Interacts with importin beta only in the presence of importin alpha, suggesting a direct interaction with importin alpha. Interacts with APOBEC3G in an RNA-dependent manner. Phosphorylation by MAPK8/JNK1 and or MAPK9/JNK2 in response to oxidative stress promotes P-body assembly. Phosphorylated during meiotic maturation. In terms of tissue distribution, highly expressed in developing oocytes.

It is found in the cytoplasm. The protein localises to the nucleus. It localises to the PML body. Its subcellular location is the nucleus speckle. Functionally, EIF4E-binding protein that regulates translation and stability of mRNAs in processing bodies (P-bodies). Plays a key role in P-bodies to coordinate the storage of translationally inactive mRNAs in the cytoplasm and prevent their degradation. Acts as a binding platform for multiple RNA-binding proteins: promotes deadenylation of mRNAs via its interaction with the CCR4-NOT complex, and blocks decapping via interaction with eIF4E (EIF4E and EIF4E2), thereby protecting deadenylated and repressed mRNAs from degradation. Component of a multiprotein complex that sequesters and represses translation of proneurogenic factors during neurogenesis. Promotes miRNA-mediated translational repression. Involved in mRNA translational repression mediated by the miRNA effector TNRC6B by protecting TNRC6B-targeted mRNAs from decapping and subsequent decay. Required for the formation of P-bodies. Also acts as a nucleoplasmic shuttling protein, which mediates the nuclear import of EIF4E and DDX6 by a piggy-back mechanism. This chain is Eukaryotic translation initiation factor 4E transporter, found in Mus musculus (Mouse).